The chain runs to 214 residues: Ras-related protein Rab2BV (214 aa).

Position 19–26 (19–26 (GDSGVGKS)) interacts with GTP. The Effector region motif lies at 41–49 (SKSTIGVEF). Residues 67–71 (DTAGQ) and 125–128 (NKSD) contribute to the GTP site. Residues Cys-211 and Cys-212 are each lipidated (S-geranylgeranyl cysteine).

It belongs to the small GTPase superfamily. Rab family.

The protein localises to the cell membrane. In Beta vulgaris (Sugar beet), this protein is Ras-related protein Rab2BV (RAB2BV).